The primary structure comprises 555 residues: Transmembrane protein 87B (555 aa).

The N-terminal stretch at 1-42 (MAAACRSEAGLLPSLLCRRPAGAQLLRVALCLLCWVPAAVDA) is a signal peptide. Over 43-216 (VPELGLWTRT…HGYISASDWP (174 aa)) the chain is Lumenal. 3 N-linked (GlcNAc...) asparagine glycosylation sites follow: Asn-68, Asn-160, and Asn-198. Residues 217–237 (LMIFYMVMCIVYILYGVLWLL) form a helical membrane-spanning segment. Residues 238–248 (WSACYWKDILR) lie on the Cytoplasmic side of the membrane. Residues 249–269 (IQFWIAAVIFLGMLEKAVFYS) traverse the membrane as a helical segment. The Lumenal portion of the chain corresponds to 270 to 300 (EYQNINSTGLSTQGLLIFAELISAVKRTLAR). Residue Asn-275 is glycosylated (N-linked (GlcNAc...) asparagine). The chain crosses the membrane as a helical span at residues 301–321 (LLVIIVSLGYGIVKPRLGTVM). Residues 322–323 (HR) lie on the Cytoplasmic side of the membrane. The chain crosses the membrane as a helical span at residues 324-344 (VIGLGLLYLIFAAIEGVMRVI). The Lumenal segment spans residues 345–351 (GGSKHLA). Residues 352–372 (VVLTDIVLAVIDSIFVWFIFI) traverse the membrane as a helical segment. Residues 373–394 (SLAQTMKTLRLRKNTVKFSLYR) are Cytoplasmic-facing. The chain crosses the membrane as a helical span at residues 395–415 (HFTNTLIFAVLASIVFMVWTT). Residues 416–429 (KTFRIAKCQSDWME) lie on the Lumenal side of the membrane. Residues 430–450 (LWVDDAFWSFLFSVILIVIMF) form a helical membrane-spanning segment. The Cytoplasmic portion of the chain corresponds to 451–555 (LWRPSANNQR…EKMFSSEKIM (105 aa)). 3 positions are modified to phosphoserine: Ser-470, Ser-497, and Ser-534.

It belongs to the LU7TM family. TMEM87 subfamily.

The protein resides in the golgi apparatus membrane. In terms of biological role, may be involved in retrograde transport from endosomes to the trans-Golgi network (TGN). This is Transmembrane protein 87B from Mus musculus (Mouse).